Consider the following 185-residue polypeptide: Ribosome-recycling factor (185 aa).

This sequence belongs to the RRF family.

It is found in the cytoplasm. Responsible for the release of ribosomes from messenger RNA at the termination of protein biosynthesis. May increase the efficiency of translation by recycling ribosomes from one round of translation to another. The protein is Ribosome-recycling factor of Alcanivorax borkumensis (strain ATCC 700651 / DSM 11573 / NCIMB 13689 / SK2).